A 253-amino-acid polypeptide reads, in one-letter code: MTEPGQTTHFGYRDVPLQDKQTLVNDVFHSVASRYDLMNDLMSGGMHRLWKDVMITTLNPPRDDQPFRLLDVAGGTGDISFRAAKASGAGFQATVCDINTDMLEVGRQRAVERHLDGQVEFVEGNAEALQFPDKSYDAYTIAFGIRNVPRIDLALKEAHRVLKPGSRFLCLEFSSVDVPGLAKIYDLFSFKVIPQIGRVVTGDAESYQYLVESIRKFPKPADFGEMMREAGFARVNWQVLSGGIVALHSGWRL.

S-adenosyl-L-methionine-binding positions include threonine 76, aspartate 97, and 125–126; that span reads NA.

This sequence belongs to the class I-like SAM-binding methyltransferase superfamily. MenG/UbiE family.

The enzyme catalyses a 2-demethylmenaquinol + S-adenosyl-L-methionine = a menaquinol + S-adenosyl-L-homocysteine + H(+). It catalyses the reaction a 2-methoxy-6-(all-trans-polyprenyl)benzene-1,4-diol + S-adenosyl-L-methionine = a 5-methoxy-2-methyl-3-(all-trans-polyprenyl)benzene-1,4-diol + S-adenosyl-L-homocysteine + H(+). Its pathway is quinol/quinone metabolism; menaquinone biosynthesis; menaquinol from 1,4-dihydroxy-2-naphthoate: step 2/2. It functions in the pathway cofactor biosynthesis; ubiquinone biosynthesis. Its function is as follows. Methyltransferase required for the conversion of demethylmenaquinol (DMKH2) to menaquinol (MKH2) and the conversion of 2-polyprenyl-6-methoxy-1,4-benzoquinol (DDMQH2) to 2-polyprenyl-3-methyl-6-methoxy-1,4-benzoquinol (DMQH2). This Rhodopseudomonas palustris (strain HaA2) protein is Ubiquinone/menaquinone biosynthesis C-methyltransferase UbiE.